The primary structure comprises 79 residues: Cell division protein ZapB (79 aa).

Residues 4-78 are a coiled coil; sequence EVFEKLEAKV…LRALLGKMEE (75 aa).

The protein belongs to the ZapB family. As to quaternary structure, homodimer. The ends of the coiled-coil dimer bind to each other, forming polymers. Interacts with FtsZ.

It localises to the cytoplasm. In terms of biological role, non-essential, abundant cell division factor that is required for proper Z-ring formation. It is recruited early to the divisome by direct interaction with FtsZ, stimulating Z-ring assembly and thereby promoting cell division earlier in the cell cycle. Its recruitment to the Z-ring requires functional FtsA or ZipA. This is Cell division protein ZapB from Erwinia tasmaniensis (strain DSM 17950 / CFBP 7177 / CIP 109463 / NCPPB 4357 / Et1/99).